The sequence spans 415 residues: MLQKTVLLLALVAQVLMLENGLLRTPPMGWLAWERFRCNINCEEDPKNCISERLFMEMADRLAQDGWRDLGYVYLNIDDCWIGGRDATGRLIPDPKRFPHGIAFLADYAHSLGLKLGIYEDMGKMTCMGYPGTTLDKVELDAATFAEWKVDMLKLDGCYSTPKERAEGYPKMAAALNATGRPIAFSCSWPAYEGGLPPKVNYTEVAGTCNLWRNYKDIQDSWKSVLSILDWFVKHQDILQPVSGPGHWNDPDMLLIGNFGLSFDESRAQMALWTVLAAPLFMSTDLRTISPQNIDILQNPLLIKINQDPLGIQGRLIFKSKSHIEVFKRNLSDDASALVFFSRRTDMPYHFHCSLLELNYPKGSVYEGQNVFTGDIISGLHPETNFTVIINPSGVVMWYLYPVKGLGIYTMMSQL.

The signal sequence occupies residues 1–17 (MLQKTVLLLALVAQVLM). Intrachain disulfides connect Cys-38-Cys-80, Cys-42-Cys-49, and Cys-127-Cys-158. Substrate contacts are provided by residues 78 to 79 (DD) and Lys-154. Catalysis depends on Asp-156, which acts as the Nucleophile. Asn-177 carries an N-linked (GlcNAc...) asparagine glycan. Cys-187 and Cys-209 are disulfide-bonded. Ser-188 serves as a coordination point for substrate. N-linked (GlcNAc...) asparagine glycosylation occurs at Asn-201. 2 residues coordinate substrate: Arg-213 and Asp-217. Asp-217 acts as the Proton donor in catalysis. Phosphoserine is present on Ser-322. Residue Asn-330 is glycosylated (N-linked (GlcNAc...) asparagine). At Ser-332 the chain carries Phosphoserine. Asn-385 carries N-linked (GlcNAc...) asparagine glycosylation.

The protein belongs to the glycosyl hydrolase 27 family. In terms of assembly, homodimer.

The protein localises to the lysosome. It carries out the reaction Cleavage of non-reducing alpha-(1-&gt;3)-N-acetylgalactosamine residues from human blood group A and AB mucin glycoproteins, Forssman hapten and blood group A lacto series glycolipids.. The catalysed reaction is a neolactoside IV(3)-alpha-GalNAc,IV(2)-alpha-Fuc-nLc4Cer(d18:1(4E)) + H2O = a neolactoside IV(2)-alpha-Fuc-nLc4Cer(d18:1(4E)) + N-acetyl-alpha-D-galactosamine. It catalyses the reaction a neolactoside IV(3)-alpha-GalNAc,IV(2)-alpha-Fuc-nLc4Cer(d18:0) + H2O = a neolactoside IV(2)-alpha-Fuc-nLc4Cer(d18:0) + N-acetyl-alpha-D-galactosamine. The enzyme catalyses a globoside IV3GalNAc-Gb4Cer + H2O = N-acetyl-alpha-D-galactosamine + a globoside Gb4Cer. Removes terminal alpha-N-acetylgalactosamine residues from glycolipids and glycopeptides. Required for the breakdown of glycolipids. This chain is Alpha-N-acetylgalactosaminidase (Naga), found in Rattus norvegicus (Rat).